A 397-amino-acid polypeptide reads, in one-letter code: Phosphoglycerate kinase (397 aa).

Residues 21–23 (DFN), R36, 59–62 (HCGR), R118, and R151 each bind substrate. ATP contacts are provided by residues K201, E323, and 353 to 356 (GGDT).

The protein belongs to the phosphoglycerate kinase family. As to quaternary structure, monomer.

It is found in the cytoplasm. The enzyme catalyses (2R)-3-phosphoglycerate + ATP = (2R)-3-phospho-glyceroyl phosphate + ADP. It participates in carbohydrate degradation; glycolysis; pyruvate from D-glyceraldehyde 3-phosphate: step 2/5. The polypeptide is Phosphoglycerate kinase (Bartonella henselae (strain ATCC 49882 / DSM 28221 / CCUG 30454 / Houston 1) (Rochalimaea henselae)).